The primary structure comprises 82 residues: MSERGHRRTQNGVVVSDKMDKTVVVKVDRLIKHPVYNKYIKRSAKYKVHDENNVCKIGDRVQIIECRPLSKDKRWNLKQISN.

Belongs to the universal ribosomal protein uS17 family. Part of the 30S ribosomal subunit.

Its function is as follows. One of the primary rRNA binding proteins, it binds specifically to the 5'-end of 16S ribosomal RNA. In Pelobacter propionicus (strain DSM 2379 / NBRC 103807 / OttBd1), this protein is Small ribosomal subunit protein uS17.